A 138-amino-acid polypeptide reads, in one-letter code: Small ribosomal subunit protein uS11c (138 aa).

Residues Met-1–Arg-24 are disordered. The span at Gly-9–Arg-24 shows a compositional bias: basic residues.

Belongs to the universal ribosomal protein uS11 family. In terms of assembly, part of the 30S ribosomal subunit.

It localises to the plastid. Its subcellular location is the chloroplast. This Liriodendron tulipifera (Tuliptree) protein is Small ribosomal subunit protein uS11c.